The sequence spans 125 residues: Small ribosomal subunit protein uS12c (125 aa).

Residues 1–23 (MPTLEHLTRSPRKKIKRKTKSPA) form a disordered region. Basic residues predominate over residues 9–20 (RSPRKKIKRKTK).

The protein belongs to the universal ribosomal protein uS12 family. Part of the 30S ribosomal subunit.

It localises to the plastid. The protein resides in the chloroplast. With S4 and S5 plays an important role in translational accuracy. Located at the interface of the 30S and 50S subunits. The protein is Small ribosomal subunit protein uS12c (rps12) of Euglena gracilis.